Consider the following 601-residue polypeptide: Transcription factor ATEG_07666 (601 aa).

Residues 17–44 (CEECRRRKARCDRVRPKCGFCTENGMQC) constitute a DNA-binding region (zn(2)-C6 fungal-type).

The protein localises to the nucleus. Its function is as follows. Specific transcriptional regulator for the azasperpyranone A biosynthesis cluster B. The polypeptide is Transcription factor ATEG_07666 (Aspergillus terreus (strain NIH 2624 / FGSC A1156)).